A 578-amino-acid polypeptide reads, in one-letter code: Proline--tRNA ligase (578 aa).

Belongs to the class-II aminoacyl-tRNA synthetase family. ProS type 1 subfamily. Homodimer.

It is found in the cytoplasm. It carries out the reaction tRNA(Pro) + L-proline + ATP = L-prolyl-tRNA(Pro) + AMP + diphosphate. Its function is as follows. Catalyzes the attachment of proline to tRNA(Pro) in a two-step reaction: proline is first activated by ATP to form Pro-AMP and then transferred to the acceptor end of tRNA(Pro). As ProRS can inadvertently accommodate and process non-cognate amino acids such as alanine and cysteine, to avoid such errors it has two additional distinct editing activities against alanine. One activity is designated as 'pretransfer' editing and involves the tRNA(Pro)-independent hydrolysis of activated Ala-AMP. The other activity is designated 'posttransfer' editing and involves deacylation of mischarged Ala-tRNA(Pro). The misacylated Cys-tRNA(Pro) is not edited by ProRS. In Brachyspira hyodysenteriae (strain ATCC 49526 / WA1), this protein is Proline--tRNA ligase.